A 1281-amino-acid chain; its full sequence is SCL-interrupting locus protein homolog (1281 aa).

6 stretches are compositionally biased toward polar residues: residues 390 to 401, 461 to 475, 528 to 560, 567 to 592, 770 to 790, and 891 to 913; these read VFKQSPLPNKLS, RNNSPFSSTPQNVNN, HLQSSNQIRRNSTSTSSAFSTPRSGCSPDSTVH, EQEQNINGSAQPQGTTPLMRSGSYSR, SKTTIPNNSKQKQVESVSTEQ, and QDINNSKSLSNQTDHTESPNTAE. Disordered stretches follow at residues 390-431, 450-592, 765-790, and 879-915; these read VFKQ…QVSR, KSAS…SYSR, AESEPSKTTIPNNSKQKQVESVSTEQ, and RDDASYPLPDVQQDINNSKSLSNQTDHTESPNTAEID.

The protein resides in the cytoplasm. It localises to the cytosol. It is found in the cytoskeleton. The protein localises to the microtubule organizing center. Its subcellular location is the centrosome. The protein resides in the centriole. Its function is as follows. Plays an essential role in early embryonic development. Plays an important role in the regulation of centriole duplication. The protein is SCL-interrupting locus protein homolog (stil) of Xenopus laevis (African clawed frog).